A 723-amino-acid polypeptide reads, in one-letter code: Catalase-peroxidase (723 aa).

The tryptophyl-tyrosyl-methioninium (Trp-Tyr) (with M-250) cross-link spans 96-224 (WHAAGTYRIQ…LAAVQMGLIY (129 aa)). His97 functions as the Proton acceptor in the catalytic mechanism. The segment at residues 224 to 250 (YVNPEGVNSQPDPIKTGEQVRVTFARM) is a cross-link (tryptophyl-tyrosyl-methioninium (Tyr-Met) (with W-96)). His265 contributes to the heme b binding site.

The protein belongs to the peroxidase family. Peroxidase/catalase subfamily. Homodimer or homotetramer. Heme b serves as cofactor. Post-translationally, formation of the three residue Trp-Tyr-Met cross-link is important for the catalase, but not the peroxidase activity of the enzyme.

The catalysed reaction is H2O2 + AH2 = A + 2 H2O. It catalyses the reaction 2 H2O2 = O2 + 2 H2O. Bifunctional enzyme with both catalase and broad-spectrum peroxidase activity. The sequence is that of Catalase-peroxidase from Marinobacter nauticus (strain ATCC 700491 / DSM 11845 / VT8) (Marinobacter aquaeolei).